The sequence spans 404 residues: MSPIIHSLLDTDLYKFTMLQVVLHKFPQTHSVYHFRCRNLEDTVYPLVDILDDLNEQLDHLCNLKYKEDELQYLRKLRFIKSDFVDYLELFQLKRRFIHASIDEEGRLDIRIEGPMVQAMMFEIFVLAIVNELYFSRIKTDEVWAEGERRLQAKLELIQQYEKAQQPNDPPFLVSDFGTRRRYSFEWQKHVVAAFHNTVPNVFRGTSNVLLAKELNITPIGTMAHEFLQAFQALDVRLRDFQKAALETWVQEYRGDLGIALTDVVGMDAFLRDFDLYFAKLFDGLRHDSGDPYEWGDKAYAHYRKLKIDTKTKMLTFSDGLNLPKAWELHQYFKDRFQVSFGIGTNLTNDMGQTPLNIVLKLVECNGQSVAKISDSPGKTMTDNDTFLAYLRQVFQIEELDEAI.

Phosphohistidine; by autocatalysis is present on His225.

Belongs to the NAPRTase family. Post-translationally, transiently phosphorylated on a His residue during the reaction cycle. Phosphorylation strongly increases the affinity for substrates and increases the rate of nicotinate D-ribonucleotide production. Dephosphorylation regenerates the low-affinity form of the enzyme, leading to product release.

The catalysed reaction is nicotinate + 5-phospho-alpha-D-ribose 1-diphosphate + ATP + H2O = nicotinate beta-D-ribonucleotide + ADP + phosphate + diphosphate. It participates in cofactor biosynthesis; NAD(+) biosynthesis; nicotinate D-ribonucleotide from nicotinate: step 1/1. Its function is as follows. Catalyzes the synthesis of beta-nicotinate D-ribonucleotide from nicotinate and 5-phospho-D-ribose 1-phosphate at the expense of ATP. In Acinetobacter baumannii (strain ATCC 17978 / DSM 105126 / CIP 53.77 / LMG 1025 / NCDC KC755 / 5377), this protein is Nicotinate phosphoribosyltransferase.